Reading from the N-terminus, the 342-residue chain is Polycomb group RING finger protein 2 (342 aa).

An RING-type zinc finger spans residues 18 to 57; that stretch reads CALCGGYFIDATTIVECLHSFCKTCIVRYLETNKYCPMCD. Residues Lys-51 and Lys-88 each participate in a glycyl lysine isopeptide (Lys-Gly) (interchain with G-Cter in SUMO2) cross-link. The Nuclear localization signal signature appears at 81 to 95; that stretch reads KLVPGLFKDEMKRRR. Position 237 is a phosphothreonine; by PKA (Thr-237). The interval 237-342 is disordered; that stretch reads TLPTVPTPSE…MTVNGAPCPP (106 aa). Over residues 243 to 253 the composition is skewed to polar residues; that stretch reads TPSEGTNTSGA. Over residues 263-318 the composition is skewed to low complexity; it reads APSPATLPATSSSLPSPATPSHGSPSSHGPPATHPTSPTPPSTAAGTTTATNGGTS. Residues 319–328 are compositionally biased toward polar residues; it reads NCLQTPSSTS. At Thr-334 the chain carries Phosphothreonine; by PKA.

In terms of assembly, exists as both a monomer and homodimer. Component of a PRC1-like complex. Interacts with CBX8, RING1 and RNF2. Interacts with CBX7. Interacts with PHC2. In terms of processing, phosphorylated. Homodimer formation is regulated by phosphorylation with only unphosphorylated proteins forming homodimers. In terms of tissue distribution, expressed in embryonic stem cells. Expressed in a variety of tumor cells and in neural tissues.

It localises to the nucleus. Functionally, transcriptional repressor. Binds specifically to the DNA sequence 5'-GACTNGACT-3'. Has tumor suppressor activity. May play a role in control of cell proliferation and/or neural cell development. Regulates proliferation of early T progenitor cells by maintaining expression of HES1. Also plays a role in antero-posterior specification of the axial skeleton and negative regulation of the self-renewal activity of hematopoietic stem cells. Component of a Polycomb group (PcG) multiprotein PRC1-like complex, a complex class required to maintain the transcriptionally repressive state of many genes, including Hox genes, throughout development. PcG PRC1 complex acts via chromatin remodeling and modification of histones; it mediates monoubiquitination of histone H2A 'Lys-119', rendering chromatin heritably changed in its expressibility. Within the PRC1-like complex, regulates RNF2 ubiquitin ligase activity. This Mus musculus (Mouse) protein is Polycomb group RING finger protein 2 (Pcgf2).